Consider the following 117-residue polypeptide: Large ribosomal subunit protein bL20c (117 aa).

The protein belongs to the bacterial ribosomal protein bL20 family.

It is found in the plastid. The protein resides in the chloroplast. Binds directly to 23S ribosomal RNA and is necessary for the in vitro assembly process of the 50S ribosomal subunit. It is not involved in the protein synthesizing functions of that subunit. The polypeptide is Large ribosomal subunit protein bL20c (Arabis hirsuta (Hairy rock-cress)).